We begin with the raw amino-acid sequence, 179 residues long: NADH-quinone oxidoreductase subunit B (179 aa).

Residues Cys35, Cys36, Cys100, and Cys129 each contribute to the [4Fe-4S] cluster site.

This sequence belongs to the complex I 20 kDa subunit family. As to quaternary structure, NDH-1 is composed of 14 different subunits. Subunits NuoB, C, D, E, F, and G constitute the peripheral sector of the complex. Requires [4Fe-4S] cluster as cofactor.

Its subcellular location is the cell inner membrane. It carries out the reaction a quinone + NADH + 5 H(+)(in) = a quinol + NAD(+) + 4 H(+)(out). Functionally, NDH-1 shuttles electrons from NADH, via FMN and iron-sulfur (Fe-S) centers, to quinones in the respiratory chain. Couples the redox reaction to proton translocation (for every two electrons transferred, four hydrogen ions are translocated across the cytoplasmic membrane), and thus conserves the redox energy in a proton gradient. In Aquifex aeolicus (strain VF5), this protein is NADH-quinone oxidoreductase subunit B.